The following is a 230-amino-acid chain: MGVCTIFRWLFAAYLLSSYKSLPGAYFVRFYYYVIQNLFLPMFTGFETENIKKLEKNEYGCFSYTSLDTYASPFECDFYFHKSNSTYFAELDISRGNLMCKIFQKLMLNSKHYPYIPVANVFTNFLKEIKPFQKYSVSSRIICWDEKWIYVMSRFTIKKGTVLCSLSLTKYVLKDGRKTIKPKDALEYCGLYNEKVAKISEDNLKLLTERCGFHETVPLENLSQEYCSEI.

This sequence belongs to the lcsJ thioesterase family.

The protein is Probable thioesterase YBR096W of Saccharomyces cerevisiae (strain ATCC 204508 / S288c) (Baker's yeast).